The chain runs to 246 residues: 3'(2'),5'-bisphosphate nucleotidase CysQ (246 aa).

Mg(2+) contacts are provided by Glu-64, Asp-83, Leu-85, Asp-86, and Asp-205. Position 64 (Glu-64) interacts with substrate. Residues 85–88 (LDGT) and Asp-205 contribute to the substrate site.

It belongs to the inositol monophosphatase superfamily. CysQ family. Requires Mg(2+) as cofactor.

The protein localises to the cell inner membrane. It catalyses the reaction adenosine 3',5'-bisphosphate + H2O = AMP + phosphate. Functionally, converts adenosine-3',5'-bisphosphate (PAP) to AMP. The protein is 3'(2'),5'-bisphosphate nucleotidase CysQ of Shigella flexneri.